A 143-amino-acid polypeptide reads, in one-letter code: Ayaconin (143 aa).

Positions 1–22 (MSFLFFLVVLISIGLWVGPCVA) are cleaved as a signal peptide.

As to quaternary structure, interacts with human F12 (inactive). Salivary gland.

The protein localises to the secreted. Inhibits the intrinsic blood coagulation pathway in the host by blocking activation of host coagulation factor XII (F12). The chain is Ayaconin from Lutzomyia ayacuchensis (Sand fly).